The following is a 311-amino-acid chain: Sensor histidine kinase YcbM (311 aa).

Residues 1–21 form a helical membrane-spanning segment; it reads MTVLWVAAVIALACLNVIQFI. Topologically, residues 22 to 311 are cytoplasmic; the sequence is MKKKRDGNLA…FTITLKRMTY (290 aa). The Histidine kinase domain occupies 92–310; it reads NMSHDLKTPL…AFTITLKRMT (219 aa). A Phosphohistidine; by autocatalysis modification is found at His95.

It localises to the cell membrane. It catalyses the reaction ATP + protein L-histidine = ADP + protein N-phospho-L-histidine.. In terms of biological role, member of the two-component regulatory system YcbM/YcbL. Probably activates YcbL by phosphorylation. In Bacillus subtilis (strain 168), this protein is Sensor histidine kinase YcbM (ycbM).